A 321-amino-acid polypeptide reads, in one-letter code: Serpentine receptor class delta-63 (321 aa).

The next 7 membrane-spanning stretches (helical) occupy residues 14–34 (LVYM…YNFT), 41–61 (VKYF…MAFA), 83–103 (YIGP…GIVV), 128–148 (LWTL…IVII), 190–208 (AAMS…GTYW), 240–260 (NFQI…YFMI), and 273–293 (TITV…IYFI).

This sequence belongs to the nematode receptor-like protein srd family.

It is found in the membrane. In Caenorhabditis elegans, this protein is Serpentine receptor class delta-63 (srd-63).